A 392-amino-acid polypeptide reads, in one-letter code: General receptor for phosphoinositides 1-associated scaffold protein (392 aa).

The disordered stretch occupies residues 1-50; the sequence is MTLRRLRKLQQKEEATAAPDPAGRAPDSEAARAAPLPSGPPAAAAPPGAP. Positions 37-49 are enriched in pro residues; that stretch reads PSGPPAAAAPPGA. Threonine 76 bears the Phosphothreonine mark. Residue serine 93 is modified to Phosphoserine. Residues 100 to 189 form the PDZ domain; the sequence is VLTLEKGDNQ…VLRLETLYGT (90 aa). The tract at residues 180–257 is interaction with PSCD3; the sequence is VLRLETLYGT…GAGLLPGSLP (78 aa). A Phosphotyrosine modification is found at tyrosine 236. At arginine 269 the chain carries Omega-N-methylarginine. Residues 294–315 form a disordered region; that stretch reads PQALPPPPPPARALGPSSAETP. Position 384 is a phosphoserine (serine 384).

In terms of assembly, heteromer. Composed of TAMALIN, CYTH2 and at least one GRM1. Also interacts with GRM2, GRM3 and GRM5. Interacts with CYTH3. Highly expressed in brain, heart and lung, and to a lower extent in embryo, kidney and ovary.

The protein localises to the cytoplasm. The protein resides in the perinuclear region. It localises to the cell membrane. It is found in the postsynaptic cell membrane. Its function is as follows. Plays a role in intracellular trafficking and contributes to the macromolecular organization of group 1 metabotropic glutamate receptors (mGluRs) at synapses. This chain is General receptor for phosphoinositides 1-associated scaffold protein, found in Mus musculus (Mouse).